We begin with the raw amino-acid sequence, 810 residues long: Phenylalanine--tRNA ligase beta subunit (810 aa).

Residues 40–153 (KLPDQKVIVG…EACEIGQPLA (114 aa)) enclose the tRNA-binding domain. Residues 399–480 (AAQKIVSLRP…RLYGYNNLEP (82 aa)) form the B5 domain. The Mg(2+) site is built by D458, D464, E467, and E468. Residues 714 to 808 (SKFPVVERDL…ARSELGAVIR (95 aa)) enclose the FDX-ACB domain.

It belongs to the phenylalanyl-tRNA synthetase beta subunit family. Type 1 subfamily. In terms of assembly, tetramer of two alpha and two beta subunits. Mg(2+) is required as a cofactor.

Its subcellular location is the cytoplasm. The catalysed reaction is tRNA(Phe) + L-phenylalanine + ATP = L-phenylalanyl-tRNA(Phe) + AMP + diphosphate + H(+). This is Phenylalanine--tRNA ligase beta subunit from Chlorobaculum tepidum (strain ATCC 49652 / DSM 12025 / NBRC 103806 / TLS) (Chlorobium tepidum).